The sequence spans 381 residues: Spindlin interactor and repressor of chromatin-binding protein (381 aa).

K49 is covalently cross-linked (Glycyl lysine isopeptide (Lys-Gly) (interchain with G-Cter in SUMO2)). Phosphoserine occurs at positions 122 and 149. Residues 148 to 158 (PSLPSLESGQD) are compositionally biased toward polar residues. The disordered stretch occupies residues 148 to 170 (PSLPSLESGQDGQPDPISNPDPV). Glycyl lysine isopeptide (Lys-Gly) (interchain with G-Cter in SUMO2) cross-links involve residues K190 and K221. Disordered stretches follow at residues 203 to 270 (PVTP…TDGS), 285 to 320 (LRTTDCKDSSKDSRAAEGLPQPQNPSSASPPGLRGT), and 335 to 381 (AVSL…GSGV). The segment covering 219-229 (RWKESPENEPA) has biased composition (basic and acidic residues). Phosphoserine occurs at positions 249 and 252. Basic and acidic residues predominate over residues 288–299 (TDCKDSSKDSRA). Residues K291 and K295 each participate in a glycyl lysine isopeptide (Lys-Gly) (interchain with G-Cter in SUMO2) cross-link. Residues 304 to 315 (PQPQNPSSASPP) are compositionally biased toward low complexity. A phosphoserine mark is found at S310 and S313.

Interacts with SPIN1, SPIN2A, SPIN2B, SPIN3 and SPIN4. Interacts with TCF7L2 in a SPIN1-dependent manner. Interacts with PARP1; promoting PARP1 ADP-ribosyltransferase activity.

The protein resides in the nucleus. It localises to the chromosome. Chromatin protein that stabilizes SPIN1 and enhances its association with histone H3 trimethylated at both 'Lys-4' and 'Lys-9' (H3K4me3K9me3). Positively regulates poly-ADP-ribosylation in response to DNA damage; acts by facilitating PARP1 ADP-ribosyltransferase activity. The polypeptide is Spindlin interactor and repressor of chromatin-binding protein (Mus musculus (Mouse)).